The sequence spans 282 residues: MEPLPEPASGPRPRPHRLLLLSLLLLLLPLLPAPELGPRQARAEDTDWVRLPSKCEVCKYVAVELKSAFEETGKTKEVIDTGYGILDRKASGVKYTKSDLRLIEVTETICKRLLDYSLHKERTGSNRFAKGMSETFETLHNLVHKGVKVVMDIPYELWNETSAEVADLKKQCDVLVEEFEEVIEDWYRNHQEEDLTQFLCANHVLKGKDASCLAEQWSGKKGDTAALGGKKSKKKSGRAKGLGGGSSKQRKELGDLDGDPSPEEDEGIQKASPLTHSPPDEL.

The signal sequence occupies residues 1–33; sequence MEPLPEPASGPRPRPHRLLLLSLLLLLLPLLPA. One can recognise a Saposin B-type domain in the interval 53–275; sequence SKCEVCKYVA…EGIQKASPLT (223 aa). Disulfide bonds link Cys55-Cys212, Cys58-Cys200, and Cys110-Cys172. Asn159 carries an N-linked (GlcNAc...) asparagine glycan. The stretch at 159 to 185 forms a coiled coil; sequence NETSAEVADLKKQCDVLVEEFEEVIED. Positions 221–282 are disordered; the sequence is KGDTAALGGK…PLTHSPPDEL (62 aa). Positions 255–266 are enriched in acidic residues; that stretch reads DLDGDPSPEEDE.

This sequence belongs to the canopy family. Interacts with HSP90B1; this interaction is disrupted in the presence of ATP. Interacts with TLR1, TLR2, TLR4 and TLR9.

The protein resides in the endoplasmic reticulum. In terms of biological role, toll-like receptor (TLR)-specific co-chaperone for HSP90B1. Required for proper TLR folding, except that of TLR3, and hence controls TLR exit from the endoplasmic reticulum. Consequently, required for both innate and adaptive immune responses. The sequence is that of Protein canopy homolog 3 (CNPY3) from Bos taurus (Bovine).